The primary structure comprises 373 residues: D-alanine--D-alanine ligase (373 aa).

The ATP-grasp domain occupies 156-363; sequence KKLLAADGLP…YPTLLATMIE (208 aa). Residue 184 to 239 coordinates ATP; sequence CERLGLPVFVKPARGGSSIGVSRVSSWDQLPAAVARARRHDPKVIVEAAISGRELE. Mg(2+) is bound by residues Asp318, Glu330, and Asn332.

This sequence belongs to the D-alanine--D-alanine ligase family. Mg(2+) is required as a cofactor. Requires Mn(2+) as cofactor.

The protein resides in the cytoplasm. It carries out the reaction 2 D-alanine + ATP = D-alanyl-D-alanine + ADP + phosphate + H(+). It participates in cell wall biogenesis; peptidoglycan biosynthesis. Cell wall formation. The polypeptide is D-alanine--D-alanine ligase (Mycobacterium tuberculosis (strain ATCC 25177 / H37Ra)).